The chain runs to 248 residues: Regulator of G-protein signaling 7-binding protein A (248 aa).

The interval 1–32 (MSSAPNGRKNRPRTAGTIFQIGGKAPSRESER) is disordered. 2 S-palmitoyl cysteine lipidation sites follow: C243 and C244.

It belongs to the RGS7BP/RGS9BP family. Palmitoylated. Undergoes rapid palmitoylation turnover. Palmitoylation regulates the cell membrane and nuclear shuttling and the regulation of GPCR signaling. Upon depalmitoylation, it is targeted from the plasma membrane into the nucleus. GPCR signaling inhibits depalmitoylation and promotes localization to the plasma membrane.

It localises to the nucleus. The protein localises to the cytoplasm. Its subcellular location is the cell membrane. Functionally, regulator of G protein-coupled receptor (GPCR) signaling. Regulatory subunit of the R7-Gbeta5 complexes that acts by controlling the subcellular location of the R7-Gbeta5 complexes. When palmitoylated, it targets the R7-Gbeta5 complexes to the plasma membrane, leading to inhibit G protein alpha subunits. When it is unpalmitoylated, the R7-Gbeta5 complexes undergo a nuclear/cytoplasmic shuttling. The sequence is that of Regulator of G-protein signaling 7-binding protein A (rgs7bpa) from Danio rerio (Zebrafish).